The chain runs to 549 residues: T-complex protein 1 subunit theta (549 aa).

It belongs to the TCP-1 chaperonin family. Heterooligomeric complex of about 850 to 900 kDa that forms two stacked rings, 12 to 16 nm in diameter. Interacts with CCT3, KNAT1, STM and TTG1. In terms of tissue distribution, expressed in shoot meristems, root tip, vasculature and leaf epidermis.

The protein localises to the cytoplasm. In terms of biological role, molecular chaperone; assists the folding of proteins upon ATP hydrolysis. Known to play a role, in vitro, in the folding of actin and tubulin. Contributes to stem cell maintenance through its impact on transcription factors trafficking through plasmodesmata. Probably involved in refolding translocated, partially unfolded proteins, including viral movement proteins. The polypeptide is T-complex protein 1 subunit theta (Arabidopsis thaliana (Mouse-ear cress)).